The chain runs to 736 residues: Phosphoribosylformylglycinamidine synthase subunit PurL (736 aa).

His-49 is a catalytic residue. 2 residues coordinate ATP: Tyr-52 and Lys-91. Position 93 (Glu-93) interacts with Mg(2+). Substrate-binding positions include 94–97 (SHNH) and Arg-116. The active-site Proton acceptor is His-95. Asp-117 is a Mg(2+) binding site. A substrate-binding site is contributed by Gln-240. Residue Asp-268 participates in Mg(2+) binding. 312–314 (ESQ) is a binding site for substrate. Residues Asp-493 and Gly-530 each contribute to the ATP site. Residue Asn-531 participates in Mg(2+) binding. Residue Ser-533 coordinates substrate.

It belongs to the FGAMS family. As to quaternary structure, monomer. Part of the FGAM synthase complex composed of 1 PurL, 1 PurQ and 2 PurS subunits.

The protein localises to the cytoplasm. The catalysed reaction is N(2)-formyl-N(1)-(5-phospho-beta-D-ribosyl)glycinamide + L-glutamine + ATP + H2O = 2-formamido-N(1)-(5-O-phospho-beta-D-ribosyl)acetamidine + L-glutamate + ADP + phosphate + H(+). Its pathway is purine metabolism; IMP biosynthesis via de novo pathway; 5-amino-1-(5-phospho-D-ribosyl)imidazole from N(2)-formyl-N(1)-(5-phospho-D-ribosyl)glycinamide: step 1/2. Part of the phosphoribosylformylglycinamidine synthase complex involved in the purines biosynthetic pathway. Catalyzes the ATP-dependent conversion of formylglycinamide ribonucleotide (FGAR) and glutamine to yield formylglycinamidine ribonucleotide (FGAM) and glutamate. The FGAM synthase complex is composed of three subunits. PurQ produces an ammonia molecule by converting glutamine to glutamate. PurL transfers the ammonia molecule to FGAR to form FGAM in an ATP-dependent manner. PurS interacts with PurQ and PurL and is thought to assist in the transfer of the ammonia molecule from PurQ to PurL. The polypeptide is Phosphoribosylformylglycinamidine synthase subunit PurL (Rhodopseudomonas palustris (strain BisB18)).